The sequence spans 36 residues: MTASYLPSILVPLVGILLPAVTMASLFLYIERDEIL.

Residues 7-29 (PSILVPLVGILLPAVTMASLFLY) form a helical membrane-spanning segment.

It belongs to the PsaI family.

It is found in the plastid. Its subcellular location is the chloroplast thylakoid membrane. May help in the organization of the PsaL subunit. This chain is Photosystem I reaction center subunit VIII, found in Adiantum capillus-veneris (Maidenhair fern).